The sequence spans 246 residues: Probable transcriptional regulatory protein YebC (246 aa).

The interval 1 to 20 is disordered; it reads MAGHSKWANTRHRKAAQDAK.

Belongs to the TACO1 family.

The protein localises to the cytoplasm. The sequence is that of Probable transcriptional regulatory protein YebC from Shigella boydii serotype 4 (strain Sb227).